A 201-amino-acid polypeptide reads, in one-letter code: Regulator of G-protein signaling 1 (201 aa).

The RGS domain occupies 75 to 191 (SLEKLLVSEE…LKSEIFFRLA (117 aa)).

Its subcellular location is the cell membrane. The protein resides in the cytoplasm. The protein localises to the cytosol. Regulates G protein-coupled receptor signaling cascades, including signaling downstream of the N-formylpeptide chemoattractant receptors and leukotriene receptors. Inhibits B cell chemotaxis. Inhibits signal transduction by increasing the GTPase activity of G protein alpha subunits, thereby driving them into their inactive GDP-bound form. The chain is Regulator of G-protein signaling 1 (rgs1) from Xenopus laevis (African clawed frog).